The primary structure comprises 91 residues: Cell division protein ZapA (91 aa).

Positions 59–86 form a coiled coil; the sequence is TAVNIANEYLKLKEEYDRLAAKLRREKG.

It belongs to the ZapA family. Type 2 subfamily. Homodimer. Interacts with FtsZ.

The protein localises to the cytoplasm. Activator of cell division through the inhibition of FtsZ GTPase activity, therefore promoting FtsZ assembly into bundles of protofilaments necessary for the formation of the division Z ring. It is recruited early at mid-cell but it is not essential for cell division. The polypeptide is Cell division protein ZapA (Geobacillus thermodenitrificans (strain NG80-2)).